The sequence spans 260 residues: Translation initiation factor 2 subunit alpha (260 aa).

One can recognise an S1 motif domain in the interval 12 to 83 (GDLIVGTVHK…KKGHVDASLK (72 aa)).

The protein belongs to the eIF-2-alpha family. In terms of assembly, heterotrimer composed of an alpha, a beta and a gamma chain.

In terms of biological role, eIF-2 functions in the early steps of protein synthesis by forming a ternary complex with GTP and initiator tRNA. The chain is Translation initiation factor 2 subunit alpha from Methanosphaera stadtmanae (strain ATCC 43021 / DSM 3091 / JCM 11832 / MCB-3).